A 784-amino-acid chain; its full sequence is MNPERSERIEIPVLPLRDVVVYPHMVIPLFVGREKSIRCLEAAMDHDKKIMLVAQKEASTDEPGINDLFSVGTVASILQMLKLPDATVKVLVEGLQRARISALSDNGDHFTAKAEYLTSPEIEEREQEVLVRTAINQFEGYIKLNKKIPPEVLTSLNSIDDAARLADTVAAHMPLKLSDKQSVLEMSDVDERLEYLMAMMESEIDLLQVEKRIRNRVKKQMEKSQREYYLNEQMKAIQKELGEMDDAPDENEALKRKIDAARMPKEAREKTEAELQKLKMMSPMSAEATVVRGYIDWMVQVPWNARSKVEKDLQKRRQTLDTDHFGLERVKDRILEYLAVQSRVSKIKGPILCLVGPPGVGKTSLGQSIAKATGRKYVRMALGGVRDEAEIRGHRRTYIGSMPGKLIQKMAKVGVKNPLFLLDEIDKMSSDMRGDPASALLEVLDPEQNIAFNDHYLEVDYDLSDVMFVATSNSMNIPAPLLDRMEVIRLSGYTEDEKLNIAKKHLLSKQIERNALKEHELIVDDSAIVGIIRYYTRERGVRSLERELSKLCRKAVKTLLMDKSVKHIEINADNLKDYLGVQRYDYGRADSENRVGQVTGLAWTEVGGDLLTIETACVPGKGKLTYTGSLGEVMQESIQAALTVVRARAEKLGINGDFYEKRDIHVHVPEGATPKDGPSAGIAMCTALVSCLTGNPVRADVAMTGEITLRGQVLPIGGLKEKLLAAHRGGIKTVLIPDENKRDLEEIPENVIADLDIHPVKRIEEVLALALQNAPYGMQVASVK.

The Lon N-terminal domain occupies 11-204; it reads IPVLPLRDVV…YLMAMMESEI (194 aa). 356-363 contributes to the ATP binding site; sequence GPPGVGKT. One can recognise a Lon proteolytic domain in the interval 592 to 773; that stretch reads ENRVGQVTGL…EEVLALALQN (182 aa). Catalysis depends on residues S679 and K722.

Belongs to the peptidase S16 family. As to quaternary structure, homohexamer. Organized in a ring with a central cavity.

It localises to the cytoplasm. The enzyme catalyses Hydrolysis of proteins in presence of ATP.. Functionally, ATP-dependent serine protease that mediates the selective degradation of mutant and abnormal proteins as well as certain short-lived regulatory proteins. Required for cellular homeostasis and for survival from DNA damage and developmental changes induced by stress. Degrades polypeptides processively to yield small peptide fragments that are 5 to 10 amino acids long. Binds to DNA in a double-stranded, site-specific manner. The chain is Lon protease from Erwinia amylovora (Fire blight bacteria).